A 193-amino-acid chain; its full sequence is Orotate phosphoribosyltransferase (193 aa).

116-124 (EDVVTTGKS) contributes to the 5-phospho-alpha-D-ribose 1-diphosphate binding site. Positions 120 and 148 each coordinate orotate.

This sequence belongs to the purine/pyrimidine phosphoribosyltransferase family. PyrE subfamily. Homodimer. It depends on Mg(2+) as a cofactor.

The enzyme catalyses orotidine 5'-phosphate + diphosphate = orotate + 5-phospho-alpha-D-ribose 1-diphosphate. Its pathway is pyrimidine metabolism; UMP biosynthesis via de novo pathway; UMP from orotate: step 1/2. Functionally, catalyzes the transfer of a ribosyl phosphate group from 5-phosphoribose 1-diphosphate to orotate, leading to the formation of orotidine monophosphate (OMP). The chain is Orotate phosphoribosyltransferase from Clostridium tetani (strain Massachusetts / E88).